We begin with the raw amino-acid sequence, 358 residues long: Type II restriction enzyme CviJI (358 aa).

It depends on Mg(2+) as a cofactor.

It carries out the reaction Endonucleolytic cleavage of DNA to give specific double-stranded fragments with terminal 5'-phosphates.. Its function is as follows. A P subtype restriction enzyme that recognizes the double-stranded sequence 5'-RGCY-3' and cleaves after G-2. In the presence of ATP, there is a relaxation of its specificity and it can cleave 5'-RGCN-3' and 5'-YGCY-3', but not 5'-YGCR-3' (R.CviJI* activity). The sequence is that of Type II restriction enzyme CviJI from Paramecium bursaria Chlorella virus IL3A (PBCV-IL3A).